The following is a 347-amino-acid chain: Fructose-1,6-bisphosphatase class 1 (347 aa).

Residues Glu-107, Asp-128, Leu-130, and Asp-131 each coordinate Mg(2+). Residues 131–134 (DGSS), Asn-224, Tyr-257, and Lys-286 each bind substrate. Position 292 (Glu-292) interacts with Mg(2+).

This sequence belongs to the FBPase class 1 family. As to quaternary structure, homotetramer. Requires Mg(2+) as cofactor.

Its subcellular location is the cytoplasm. The catalysed reaction is beta-D-fructose 1,6-bisphosphate + H2O = beta-D-fructose 6-phosphate + phosphate. It participates in carbohydrate biosynthesis; gluconeogenesis. This is Fructose-1,6-bisphosphatase class 1 from Sorangium cellulosum (strain So ce56) (Polyangium cellulosum (strain So ce56)).